A 498-amino-acid chain; its full sequence is Envelop protein OPG153 (498 aa).

Cys43 and Cys342 form a disulfide bridge. The interval 352–391 is disordered; it reads ATDTGHHQDSKINIKDDDVDDDDYNPKPTPIPEPYPRPPF. Over residues 355–367 the composition is skewed to basic and acidic residues; the sequence is TGHHQDSKINIKD. A compositionally biased stretch (pro residues) spans 378-390; sequence KPTPIPEPYPRPP.

This sequence belongs to the orthopoxvirus OPG153 protein family. As to quaternary structure, interacts with proteins OPG094 and OPG143. Interacts with OPG154. Interacts with OPG152. Interacts with host laminin.

Its subcellular location is the virion membrane. In terms of biological role, envelop protein that mediates acid-dependent endocytosis into host cells. Plays an important role in endocytic entry of the virus by acting as an acid-sensitive membrane fusion suppressor. Low pH in host endosomes triggers conformational changes to allow de-repression of viral fusion complex activity and membrane fusion within vesicles. Also plays a role in bridging the mature virion with structural protein OPG152. In Variola virus (isolate Human/India/Ind3/1967) (VARV), this protein is Envelop protein OPG153 (Protein OPG153).